A 346-amino-acid polypeptide reads, in one-letter code: Selenide, water dikinase (346 aa).

The active site involves Sec17. A non-standard amino acid (selenocysteine) is located at residue Sec17. ATP contacts are provided by residues Lys20 and 47-49; that span reads TSD. Asp50 contacts Mg(2+). ATP contacts are provided by residues Asp67, Asp90, and 138-140; that span reads GHT. A Mg(2+)-binding site is contributed by Asp90. Mg(2+) is bound at residue Asp226.

This sequence belongs to the selenophosphate synthase 1 family. Class I subfamily. Homodimer. It depends on Mg(2+) as a cofactor.

The catalysed reaction is hydrogenselenide + ATP + H2O = selenophosphate + AMP + phosphate + 2 H(+). Functionally, synthesizes selenophosphate from selenide and ATP. The protein is Selenide, water dikinase of Trichlorobacter lovleyi (strain ATCC BAA-1151 / DSM 17278 / SZ) (Geobacter lovleyi).